We begin with the raw amino-acid sequence, 259 residues long: Ribosomal RNA small subunit methyltransferase A (259 aa).

Residues Asn13, Leu15, Gly40, Glu61, Asp85, and Asn103 each coordinate S-adenosyl-L-methionine.

It belongs to the class I-like SAM-binding methyltransferase superfamily. rRNA adenine N(6)-methyltransferase family. RsmA subfamily.

The protein localises to the cytoplasm. The enzyme catalyses adenosine(1518)/adenosine(1519) in 16S rRNA + 4 S-adenosyl-L-methionine = N(6)-dimethyladenosine(1518)/N(6)-dimethyladenosine(1519) in 16S rRNA + 4 S-adenosyl-L-homocysteine + 4 H(+). Its function is as follows. Specifically dimethylates two adjacent adenosines (A1518 and A1519) in the loop of a conserved hairpin near the 3'-end of 16S rRNA in the 30S particle. May play a critical role in biogenesis of 30S subunits. The polypeptide is Ribosomal RNA small subunit methyltransferase A (Neisseria gonorrhoeae (strain NCCP11945)).